Here is a 114-residue protein sequence, read N- to C-terminus: Large ribosomal subunit protein uL22 (114 aa).

Belongs to the universal ribosomal protein uL22 family. As to quaternary structure, part of the 50S ribosomal subunit.

Functionally, this protein binds specifically to 23S rRNA; its binding is stimulated by other ribosomal proteins, e.g. L4, L17, and L20. It is important during the early stages of 50S assembly. It makes multiple contacts with different domains of the 23S rRNA in the assembled 50S subunit and ribosome. Its function is as follows. The globular domain of the protein is located near the polypeptide exit tunnel on the outside of the subunit, while an extended beta-hairpin is found that lines the wall of the exit tunnel in the center of the 70S ribosome. This chain is Large ribosomal subunit protein uL22, found in Desulfosudis oleivorans (strain DSM 6200 / JCM 39069 / Hxd3) (Desulfococcus oleovorans).